The sequence spans 199 residues: Probable septum site-determining protein MinC (199 aa).

This sequence belongs to the MinC family. In terms of assembly, interacts with MinD and FtsZ.

Its function is as follows. Cell division inhibitor that blocks the formation of polar Z ring septums. Rapidly oscillates between the poles of the cell to destabilize FtsZ filaments that have formed before they mature into polar Z rings. Prevents FtsZ polymerization. This chain is Probable septum site-determining protein MinC, found in Persephonella marina (strain DSM 14350 / EX-H1).